A 153-amino-acid chain; its full sequence is 6,7-dimethyl-8-ribityllumazine synthase (153 aa).

Residues phenylalanine 22, 56–58 (AFE), and 80–82 (TVI) contribute to the 5-amino-6-(D-ribitylamino)uracil site. 85 to 86 (AT) contacts (2S)-2-hydroxy-3-oxobutyl phosphate. The active-site Proton donor is the histidine 88. Residue phenylalanine 113 participates in 5-amino-6-(D-ribitylamino)uracil binding. Residue arginine 127 participates in (2S)-2-hydroxy-3-oxobutyl phosphate binding.

Belongs to the DMRL synthase family.

It catalyses the reaction (2S)-2-hydroxy-3-oxobutyl phosphate + 5-amino-6-(D-ribitylamino)uracil = 6,7-dimethyl-8-(1-D-ribityl)lumazine + phosphate + 2 H2O + H(+). The protein operates within cofactor biosynthesis; riboflavin biosynthesis; riboflavin from 2-hydroxy-3-oxobutyl phosphate and 5-amino-6-(D-ribitylamino)uracil: step 1/2. Functionally, catalyzes the formation of 6,7-dimethyl-8-ribityllumazine by condensation of 5-amino-6-(D-ribitylamino)uracil with 3,4-dihydroxy-2-butanone 4-phosphate. This is the penultimate step in the biosynthesis of riboflavin. The sequence is that of 6,7-dimethyl-8-ribityllumazine synthase from Clostridium perfringens (strain ATCC 13124 / DSM 756 / JCM 1290 / NCIMB 6125 / NCTC 8237 / Type A).